Reading from the N-terminus, the 263-residue chain is Insulin-like growth factor-binding protein 1 (263 aa).

The first 25 residues, 1–25 (MPEVLAVRAWPLLLSLAVQLGATVG), serve as a signal peptide directing secretion. An IGFBP N-terminal domain is found at 28-109 (QPWRCAPCSA…TRGQGACMTT (82 aa)). 6 disulfide bridges follow: Cys-32–Cys-59, Cys-35–Cys-61, Cys-43–Cys-62, Cys-50–Cys-65, Cys-73–Cys-86, and Cys-80–Cys-106. The segment at 102 to 131 (GQGACMTTPSDEATDTKDTTSPENVSPESS) is disordered. 5 positions are modified to phosphoserine: Ser-122, Ser-127, Ser-130, Ser-148, and Ser-160. Residues 122–131 (SPENVSPESS) are compositionally biased toward polar residues. Position 162 is a phosphotyrosine (Tyr-162). Positions 177–255 (KEPCQRELYK…SVAVRGDPKC (79 aa)) constitute a Thyroglobulin type-1 domain. Cystine bridges form between Cys-180-Cys-210, Cys-221-Cys-232, and Cys-234-Cys-255. Ser-246 carries the post-translational modification Phosphoserine. Positions 250 to 252 (RGD) match the Cell attachment site motif.

As to quaternary structure, binds equally well IGF1 and IGF2. Interacts with integrin ITGA5:ITGB1. Interacts with VHL; this interaction inhibits HIF1A degradation.

The protein resides in the secreted. In terms of biological role, multifunctional protein that plays a critical role in regulating the availability of IGFs such as IGF1 and IGF2 to their receptors and thereby regulates IGF-mediated cellular processes including cell migration, proliferation, differentiation or apoptosis in a cell-type specific manner. Also plays a positive role in cell migration by interacting with integrin ITGA5:ITGB1 through its RGD motif. Mechanistically, binding to integrins leads to activation of focal adhesion kinase/PTK2 and stimulation of the mitogen-activated protein kinase (MAPK) pathway. Regulates cardiomyocyte apoptosis by suppressing HIF-1alpha/HIF1A degradation through ubiquitination. In Bos taurus (Bovine), this protein is Insulin-like growth factor-binding protein 1 (IGFBP1).